The following is a 160-amino-acid chain: MRDITPDICDQFEDQVTLLNLPLQNFGQRTAFHGEIVTVRCYHDNSKVREVLEQDGTGKVLIVDGHGSCQKALLGDQLAILGIENGWEGIIVYGAVRDVAQMSQMDIGVQALGTCPFKTEKRGVGEVNVTLTMLNQIVQPKHHVYADWNGVLISKEALDF.

Substrate is bound by residues 75–78 (GDQL) and arginine 97. Aspartate 98 contributes to the a divalent metal cation binding site.

Belongs to the class II aldolase/RraA-like family. As to quaternary structure, homotrimer. It depends on a divalent metal cation as a cofactor.

It carries out the reaction 4-hydroxy-4-methyl-2-oxoglutarate = 2 pyruvate. The catalysed reaction is oxaloacetate + H(+) = pyruvate + CO2. In terms of biological role, catalyzes the aldol cleavage of 4-hydroxy-4-methyl-2-oxoglutarate (HMG) into 2 molecules of pyruvate. Also contains a secondary oxaloacetate (OAA) decarboxylase activity due to the common pyruvate enolate transition state formed following C-C bond cleavage in the retro-aldol and decarboxylation reactions. The sequence is that of Putative 4-hydroxy-4-methyl-2-oxoglutarate aldolase from Vibrio parahaemolyticus serotype O3:K6 (strain RIMD 2210633).